A 182-amino-acid chain; its full sequence is Triplatin (182 aa).

The first 18 residues, Met1–Ala18, serve as a signal peptide directing secretion. Cystine bridges form between Cys21/Cys133, Cys55/Cys177, and Cys88/Cys105.

This sequence belongs to the calycin superfamily. Triabin family. As to expression, expressed in salivary glands.

The protein localises to the secreted. Functionally, inhibits platelet aggregation and vasoconstriction through binding to distinct eicosanoids involved in inflammation (acts as a scavenger), and has a role in inhibiting host innate immunity by impairing platelet-assisted formation of neutrophil extracellular traps (NETs). Inhibits platelet aggregation by collagen, and low doses of thromboxane A2 mimetic (TXA2 mimetic), and arachidonic acid (AA) without affecting aggregation induced by ADP, convulxin (GP6 agonist), and PMA. Binds to TXA2, TXB2, prostaglandine H2 mimetic (PGH2 mimetic), PGJ2, and PGF2alpha. Binding is not observed to leukotrienes, AA, and biogenic amines (PGE1, 5(S)-HETE, 12(S)-HETE, 20-HETE, norepinephrine, epinephrine, serotonin, LTC4 and ADP). Induces relaxation of aorta rat previously contracted with TXA2 mimetic. Moreover, it also impairs platelet-assisted formation of neutrophil extracellular traps (NETs). NETs are web-like structures of DNA and proteins that play an important role in killing of pathogens. In addition, NETs are implicated in thrombus formation. In vivo, this protein exhibits antithrombotic activity in two distinct mice models that are highly dependent on platelets. It is noteworthy that it inhibits thrombosis without promoting excessive bleeding. The polypeptide is Triplatin (Triatoma infestans (Assassin bug)).